Consider the following 215-residue polypeptide: Cytochrome b6 (215 aa).

Residues 32 to 52 traverse the membrane as a helical segment; the sequence is IFYCLGGITLTCFLVQVATGF. Cysteine 35 lines the heme c pocket. Heme b-binding residues include histidine 86 and histidine 100. A run of 3 helical transmembrane segments spans residues 90-110, 116-136, and 186-206; these read ASMM…TGGF, LTWV…VTGY, and LHTF…FLMI. Histidine 187 and histidine 202 together coordinate heme b.

The protein belongs to the cytochrome b family. PetB subfamily. As to quaternary structure, the 4 large subunits of the cytochrome b6-f complex are cytochrome b6, subunit IV (17 kDa polypeptide, PetD), cytochrome f and the Rieske protein, while the 4 small subunits are PetG, PetL, PetM and PetN. The complex functions as a dimer. Heme b is required as a cofactor. It depends on heme c as a cofactor.

It is found in the plastid. Its subcellular location is the chloroplast thylakoid membrane. Its function is as follows. Component of the cytochrome b6-f complex, which mediates electron transfer between photosystem II (PSII) and photosystem I (PSI), cyclic electron flow around PSI, and state transitions. The sequence is that of Cytochrome b6 from Physcomitrium patens (Spreading-leaved earth moss).